The primary structure comprises 211 residues: Ribonuclease HII (211 aa).

Positions 17 to 211 (FLSAGVDEVG…CQPSLFEVRS (195 aa)) constitute an RNase H type-2 domain. A divalent metal cation contacts are provided by Asp23, Glu24, and Asp119.

The protein belongs to the RNase HII family. The cofactor is Mn(2+). It depends on Mg(2+) as a cofactor.

It localises to the cytoplasm. It catalyses the reaction Endonucleolytic cleavage to 5'-phosphomonoester.. Its function is as follows. Endonuclease that specifically degrades the RNA of RNA-DNA hybrids. This Trichodesmium erythraeum (strain IMS101) protein is Ribonuclease HII.